The primary structure comprises 538 residues: Diacylglycerol O-acyltransferase 1-1 (538 aa).

Disordered stretches follow at residues 1–39 (MVGSDGDGDGGGGEAHAPAAPAHHHRRPPRPRGGSGAIV) and 54–106 (AAAA…GGGR). The segment covering 69-83 (EAASGEPSSSSSSSP) has biased composition (low complexity). 7 helical membrane passes run 136 to 156 (AIFKQSHAGLFNLCIVVLVAV), 186 to 206 (WPLLMCCLSLPAFPLGAFAVE), 218 to 238 (VATCLHIFLSTTEIVYPVLVI), 245 to 265 (VLSGFLLIFIACIVWLKLVSF), 293 to 313 (NLQPPTLGNLIYFMMAPTLCY), 326 to 346 (GWLIRQIILYLIFTGLQGFII), and 382 to 402 (LWLCMFYAFFHLWLSILAEIL). An FYXDWWN motif motif is present at residues 409 to 415 (FYKDWWN). The next 3 helical transmembrane spans lie at 451–471 (VAVLISFLVSAVLHEICVAVP), 474–494 (ILKFWAFLGIMLQIPLIVLTA), and 505–525 (VGNMIFWFFFCIYGQPMCLLL). The active site involves histidine 464.

The protein belongs to the membrane-bound acyltransferase family. Sterol o-acyltransferase subfamily.

The protein resides in the endoplasmic reticulum membrane. The enzyme catalyses an acyl-CoA + a 1,2-diacyl-sn-glycerol = a triacyl-sn-glycerol + CoA. The protein operates within glycerolipid metabolism; triacylglycerol biosynthesis. Functionally, involved in triacylglycerol (TAG) synthesis. Catalyzes the acylation of the sn-3 hydroxy group of sn-1,2-diacylglycerol using acyl-CoA. In Oryza sativa subsp. japonica (Rice), this protein is Diacylglycerol O-acyltransferase 1-1.